A 624-amino-acid chain; its full sequence is LRR receptor kinase BAK1 (624 aa).

The signal sequence occupies residues 1-25; the sequence is MAAPRWAVWAVLLLRLLVPAARVLA. Over 26–237 the chain is Extracellular; the sequence is NMEGDALHSL…QSPGSSSSTG (212 aa). 4 LRR repeats span residues 91–115, 117–139, 140–163, and 164–188; these read LKNLQYLELYSNNISGTIPSELGNL, NLVSLDLYLNNFTGPIPDSLGNL, LKLRFLRLNNNSLSGSIPKSLTAI, and TALQVLDLSNNNLSGEVPSTGSFSL. Asn-103, Asn-114, Asn-127, Asn-149, and Asn-175 each carry an N-linked (GlcNAc...) asparagine glycan. A disordered region spans residues 205-236; that stretch reads TTKPCPGAPPFSPPPPYNPPTPVQSPGSSSST. Over residues 210–227 the composition is skewed to pro residues; that stretch reads PGAPPFSPPPPYNPPTPV. A helical membrane pass occupies residues 238–258; that stretch reads AIAGGVAAGAALLFAIPAIGF. Topologically, residues 259–624 are cytoplasmic; that stretch reads AWYRRRKPQE…LHAVELSGPR (366 aa). A Protein kinase domain is found at 301–588; sequence FSNKNILGRG…GLAERWEEWQ (288 aa). Residues 307–315 and Lys-329 each bind ATP; that span reads LGRGGFGKV. The active-site Proton acceptor is Asp-428.

Belongs to the protein kinase superfamily. Ser/Thr protein kinase family. In terms of assembly, forms homodimers. Interacts with BRI1. Interacts with REM4.1.

It is found in the cell membrane. It catalyses the reaction L-seryl-[protein] + ATP = O-phospho-L-seryl-[protein] + ADP + H(+). The catalysed reaction is L-threonyl-[protein] + ATP = O-phospho-L-threonyl-[protein] + ADP + H(+). Functionally, LRR receptor kinase involved in defense response. Does not seem to be required specifically for XA21-mediated immunity or basal resistance to Xanthomonas oryzae pv. oryzae (Xoo), or immunity to Magnaporthe oryzae. Involved in brassinosteroid (BR) signaling pathway. Acts as a coreceptor of BRI1. Forms at the plasma membrane a receptor complex with BRI1 which is activated in response to brassinolide. Phosphorylates BRI1. Required for normal plant growth and leaf development. Possesses kinase activity in vitro. This chain is LRR receptor kinase BAK1, found in Oryza sativa subsp. indica (Rice).